The sequence spans 156 residues: Small ribosomal subunit protein uS7 (156 aa).

It belongs to the universal ribosomal protein uS7 family. Part of the 30S ribosomal subunit. Contacts proteins S9 and S11.

Its function is as follows. One of the primary rRNA binding proteins, it binds directly to 16S rRNA where it nucleates assembly of the head domain of the 30S subunit. Is located at the subunit interface close to the decoding center, probably blocks exit of the E-site tRNA. The polypeptide is Small ribosomal subunit protein uS7 (Sorangium cellulosum (strain So ce56) (Polyangium cellulosum (strain So ce56))).